A 124-amino-acid chain; its full sequence is UPF0102 protein TM1040_0449 (124 aa).

This sequence belongs to the UPF0102 family.

The protein is UPF0102 protein TM1040_0449 of Ruegeria sp. (strain TM1040) (Silicibacter sp.).